The chain runs to 24 residues: Waglerin-3 (24 aa).

A compositionally biased stretch (basic and acidic residues) spans 1 to 10 (SLGGKPDLRP). The disordered stretch occupies residues 1-24 (SLGGKPDLRPCHPPCHYIPRPKPR). Residues Cys11 and Cys15 are joined by a disulfide bond.

It belongs to the waglerin family. In terms of assembly, waglerin-1 is monomeric. Amidation of the waglerin-1 C-terminus increases the affinity by 2-fold. Expressed by the venom gland.

Its subcellular location is the secreted. Functionally, waglerin-1 selectively blocks the epsilon subunit of muscle nicotinic acetylcholine receptor (nAChR). Also has effects on rodent ionotropic GABA(A) receptors (GABR), since it potentiates I(GABA) in some neurons and depresses I(GABA) in others. In mice, it elicits tachypnea, ocular proptosis, rapid collapse and spasms, whereas no toxic effects on respiration and blood pressure are observed in rats. Waglerin-3 selectively blocks the epsilon subunit of muscle nicotinic acetylcholine receptor (nAChR). It elicits tachypnea, ocular proptosis, rapid collapse and spasms in mice. It causes death by respiratory failure. This chain is Waglerin-3, found in Tropidolaemus wagleri (Wagler's pit viper).